A 450-amino-acid polypeptide reads, in one-letter code: Probable ECA polymerase (450 aa).

A run of 11 helical transmembrane segments spans residues 6 to 26 (FSGL…LTWF), 37 to 57 (VFFS…TSVL), 63 to 83 (VGVA…CFYA), 118 to 138 (VILM…NGFL), 155 to 175 (GVAL…VYFL), 181 to 201 (AWLF…MIVG), 207 to 227 (IIIA…ISLW), 228 to 248 (MLAA…LKRY), 341 to 361 (LVVM…GLII), 378 to 398 (YKAA…IVLA), and 410 to 430 (VFFI…YWLF).

The protein belongs to the WzyE family. In terms of assembly, probably part of a complex composed of WzxE, WzyE and WzzE.

The protein resides in the cell inner membrane. Its pathway is bacterial outer membrane biogenesis; enterobacterial common antigen biosynthesis. Probably involved in the polymerization of enterobacterial common antigen (ECA) trisaccharide repeat units. The sequence is that of Probable ECA polymerase from Shigella flexneri.